Here is a 151-residue protein sequence, read N- to C-terminus: uncharacterized protein (151 aa).

The disordered stretch occupies residues Met1–Arg151. Over residues Ser33 to Ser45 the composition is skewed to low complexity. A compositionally biased stretch (basic residues) spans Arg53–Arg64. Positions Ser108–Ser123 are enriched in low complexity. Positions Ala126–Pro141 are enriched in basic and acidic residues.

This is an uncharacterized protein from Aotus trivirgatus (Three-striped night monkey).